The sequence spans 1754 residues: Intraflagellar transport protein 172 homolog (1754 aa).

WD repeat units lie at residues 14 to 53 (EQIQRIAGLAWSPNQQRLAIATADRHILLYDDAGERRDKF), 64 to 103 (KNSYVIRGLAFSPDSTKLAVGQSDSIVYVYKLGESWNDKK), 110 to 149 (PQASAVTALIWLTSGSIIAGLEDGKVRALHSKSNKSQSLY), 151 to 190 (GDSICISLAANTKGTGFLSGHNDGTIIRYFMTDEATEPLG), 194 to 232 (QHPVPPFALAWPQGGFCAGGCDQRIVFYDSMGRQLRTFD), 283 to 322 (ACLYTLSSLLWRRDGARLALGSVSGAVLLFESVLRRTVWQ), and 519 to 557 (TLLSNISFVQWVPQSDVVVAQSNSNLAIWYNIDLPEHVT). 11 TPR repeats span residues 623–656 (KAMWHNLALIALEDGNLRVAQRCYAALGNVSKAY), 690–723 (GSDLRTAERIYLEQGDIESALKMYQQLGMWDEAV), 748–781 (SEQQEKAGQVLEEQGDLQQAMSLYMKANKPARAA), 807–840 (SELYELAGDIAHRLSRPEAALALYRKGGAYARAL), 852–885 (TALEEEWGDWLVSRKQLDASINHYIEAGATQKAL), 1041–1074 (RGKLKNAEMHFVASGDWKSAVHMYCSSGRWEDGY), 1140–1166 (DEVHLKIAMSLEDEGKFEAAEAEFLKA), 1167–1199 (NKPREAILMYQHAGDWQAALNVAENHLPDAVGE), 1211–1250 (TSNYKDYEALLLRAHRPDLIIEHYKQESLYEDALRIAEEH), 1282–1315 (SRSYLQKAAEFAKKEQFRKAAECLMQIDSSNAED), and 1698–1733 (FPVRGRQPVTFQGSSNQVNRDVWSKFSVALKMSPGS).

This sequence belongs to the IFT172 family.

It localises to the cell projection. It is found in the cilium. Functionally, required for the maintenance and formation of cilia. In Drosophila melanogaster (Fruit fly), this protein is Intraflagellar transport protein 172 homolog.